Here is a 382-residue protein sequence, read N- to C-terminus: V-type proton ATPase subunit C 1 (382 aa).

Thr2 bears the N-acetylthreonine mark.

This sequence belongs to the V-ATPase C subunit family. In terms of assembly, V-ATPase is a heteromultimeric enzyme made up of two complexes: the ATP-hydrolytic V1 complex and the proton translocation V0 complex. The V1 complex consists of three catalytic AB heterodimers that form a heterohexamer, three peripheral stalks each consisting of EG heterodimers, one central rotor including subunits D and F, and the regulatory subunits C and H. The proton translocation complex V0 consists of the proton transport subunit a, a ring of proteolipid subunits c9c'', rotary subunit d, subunits e and f, and the accessory subunits ATP6AP1/Ac45 and ATP6AP2/PRR. Expressed in brain (at protein level).

The protein localises to the cytoplasmic vesicle. The protein resides in the secretory vesicle. It localises to the synaptic vesicle membrane. It is found in the clathrin-coated vesicle membrane. In terms of biological role, subunit of the V1 complex of vacuolar(H+)-ATPase (V-ATPase), a multisubunit enzyme composed of a peripheral complex (V1) that hydrolyzes ATP and a membrane integral complex (V0) that translocates protons. V-ATPase is responsible for acidifying and maintaining the pH of intracellular compartments and in some cell types, is targeted to the plasma membrane, where it is responsible for acidifying the extracellular environment. Subunit C is necessary for the assembly of the catalytic sector of the enzyme and is likely to have a specific function in its catalytic activity. The chain is V-type proton ATPase subunit C 1 (Atp6v1c1) from Rattus norvegicus (Rat).